A 63-amino-acid chain; its full sequence is Large ribosomal subunit protein bL28 (63 aa).

This sequence belongs to the bacterial ribosomal protein bL28 family.

This Alkaliphilus oremlandii (strain OhILAs) (Clostridium oremlandii (strain OhILAs)) protein is Large ribosomal subunit protein bL28.